The chain runs to 469 residues: Histone chaperone rtt-106 (469 aa).

Disordered stretches follow at residues 54-73 and 364-469; these read EEPATKRRRVEAQTSGPNGA and MAEQ…EGEE. 2 stretches are compositionally biased toward basic and acidic residues: residues 364 to 379 and 402 to 415; these read MAEQRKAKKQLAENAK and ELERAQKEEEQRLQ. 2 stretches are compositionally biased toward acidic residues: residues 416–433 and 440–469; these read DEEDEEEEDYDPGSEGES and SEEEEEEEDGEGEGDEDDDEDMGEGLEGEE.

This sequence belongs to the RTT106 family. In terms of assembly, interacts with histones H3 and H4.

It localises to the nucleus. Its subcellular location is the chromosome. Its function is as follows. Histones H3 and H4 chaperone involved in the nucleosome formation and heterochromatin silencing. Required for the deposition of H3K56ac-carrying H3-H4 complex onto newly-replicated DNA. Plays a role in the transcriptional regulation of the cell-cycle dependent histone genes by creating a repressive structure at the core histone gene promoter. The chain is Histone chaperone rtt-106 (rtt-106) from Neurospora crassa (strain ATCC 24698 / 74-OR23-1A / CBS 708.71 / DSM 1257 / FGSC 987).